The following is a 282-amino-acid chain: MHIVHSIAELREKLAPFQRPAFVPTMGNLHDGHIALVKQAKPLGDVTVSSIFVNRLQFAPHEDFDSYPRTLDADAQRLEAAGCNVLFAPREKELYPEPQTYKIHPATDLGDILEGHFRPGFFIGVSTVVLKLFSCVYAGKPSGVAAFGKKDYQQVLVVRRMVQQFALPIEILAGETQRAADGLALSSRNSYLSPNERIEAAQLSKALKALGDAARATPTPDLLALEAQAMQALARRGWKPDYLTVRRRADLQPPQGPLASEPLVVLGAAKLGNTRLIDNLEI.

26–33 is a binding site for ATP; sequence MGNLHDGH. Residue His33 is the Proton donor of the active site. (R)-pantoate is bound at residue Gln57. Gln57 is a beta-alanine binding site. 148 to 151 lines the ATP pocket; sequence GKKD. A (R)-pantoate-binding site is contributed by Gln154. 185–188 is an ATP binding site; it reads LSSR.

The protein belongs to the pantothenate synthetase family. In terms of assembly, homodimer.

It localises to the cytoplasm. The enzyme catalyses (R)-pantoate + beta-alanine + ATP = (R)-pantothenate + AMP + diphosphate + H(+). It functions in the pathway cofactor biosynthesis; (R)-pantothenate biosynthesis; (R)-pantothenate from (R)-pantoate and beta-alanine: step 1/1. Catalyzes the condensation of pantoate with beta-alanine in an ATP-dependent reaction via a pantoyl-adenylate intermediate. In Polaromonas sp. (strain JS666 / ATCC BAA-500), this protein is Pantothenate synthetase.